The chain runs to 471 residues: Major facilitator-type transporter psiT1 (471 aa).

Positions 1-36 (MNPTTATDAHERTSLLSGRPQSAANSTAPYERQVQP) are disordered. Residues 14-36 (SLLSGRPQSAANSTAPYERQVQP) show a composition bias toward polar residues. N25 carries an N-linked (GlcNAc...) asparagine glycan. 8 consecutive transmembrane segments (helical) span residues 44–64 (TPVTVITIITLIYRLATTMVI), 108–128 (AIMVSMTTVIDGLGGILGTGI), 140–160 (PVLMFLLSCTMIDHLAILTVQ), 168–188 (LVTFGLIMIVETIGNENTTVF), 212–232 (GWLVLGGALAYSIGGSITTFL), 237–257 (AVYIVSFSVTGIVLTFTAFVL), 322–342 (LHSFIVTLADAYALPAMLIFF), and 356–376 (VMTTYSVSSVFVLAIALPLFI). An N-linked (GlcNAc...) asparagine glycan is attached at N384. Residues 424 to 444 (VHITVISWTIESLAYIVLGTV) form a helical membrane-spanning segment.

It belongs to the major facilitator superfamily. TCR/Tet family.

Its subcellular location is the membrane. Functionally, major facilitator-type transporter; part of the gene cluster that mediates the biosynthesis of psilocybin, a psychotropic tryptamine-derived natural product. The sequence is that of Major facilitator-type transporter psiT1 from Psilocybe cyanescens.